A 58-amino-acid chain; its full sequence is Sperm protamine P2 (58 aa).

Residues 1-58 are disordered; sequence RRRRRRGKGRGKKRKGKGKKRGKGRRRGSKGRKKKKGKGKKRKRRRRRRRKGSKGKGK.

In terms of tissue distribution, gonads.

Its subcellular location is the nucleus. The protein resides in the chromosome. Its function is as follows. Protamines substitute for histones in the chromatin of sperm during the haploid phase of spermatogenesis. They compact sperm DNA into a highly condensed, stable and inactive complex. The polypeptide is Sperm protamine P2 (Bolinus brandaris (Purple dye murex)).